The chain runs to 167 residues: Crossover junction endodeoxyribonuclease RuvC (167 aa).

Catalysis depends on residues Asp8, Glu68, and Asp140. Asp8, Glu68, and Asp140 together coordinate Mg(2+).

This sequence belongs to the RuvC family. As to quaternary structure, homodimer which binds Holliday junction (HJ) DNA. The HJ becomes 2-fold symmetrical on binding to RuvC with unstacked arms; it has a different conformation from HJ DNA in complex with RuvA. In the full resolvosome a probable DNA-RuvA(4)-RuvB(12)-RuvC(2) complex forms which resolves the HJ. The cofactor is Mg(2+).

It localises to the cytoplasm. It catalyses the reaction Endonucleolytic cleavage at a junction such as a reciprocal single-stranded crossover between two homologous DNA duplexes (Holliday junction).. Its function is as follows. The RuvA-RuvB-RuvC complex processes Holliday junction (HJ) DNA during genetic recombination and DNA repair. Endonuclease that resolves HJ intermediates. Cleaves cruciform DNA by making single-stranded nicks across the HJ at symmetrical positions within the homologous arms, yielding a 5'-phosphate and a 3'-hydroxyl group; requires a central core of homology in the junction. The consensus cleavage sequence is 5'-(A/T)TT(C/G)-3'. Cleavage occurs on the 3'-side of the TT dinucleotide at the point of strand exchange. HJ branch migration catalyzed by RuvA-RuvB allows RuvC to scan DNA until it finds its consensus sequence, where it cleaves and resolves the cruciform DNA. The sequence is that of Crossover junction endodeoxyribonuclease RuvC from Sinorhizobium medicae (strain WSM419) (Ensifer medicae).